The sequence spans 418 residues: Tyrosine--tRNA ligase (418 aa).

Tyr34 contributes to the L-tyrosine binding site. Positions 39-48 (PTADSLHLGH) match the 'HIGH' region motif. Tyr169 and Gln173 together coordinate L-tyrosine. The short motif at 229–233 (KFGKS) is the 'KMSKS' region element. Lys232 is a binding site for ATP. The S4 RNA-binding domain maps to 352-418 (HNIVEILVAA…GKKKYAVLTY (67 aa)).

This sequence belongs to the class-I aminoacyl-tRNA synthetase family. TyrS type 1 subfamily. As to quaternary structure, homodimer.

It localises to the cytoplasm. It catalyses the reaction tRNA(Tyr) + L-tyrosine + ATP = L-tyrosyl-tRNA(Tyr) + AMP + diphosphate + H(+). Functionally, catalyzes the attachment of tyrosine to tRNA(Tyr) in a two-step reaction: tyrosine is first activated by ATP to form Tyr-AMP and then transferred to the acceptor end of tRNA(Tyr). The polypeptide is Tyrosine--tRNA ligase (Streptococcus pyogenes serotype M1).